The primary structure comprises 658 residues: MKKVRFIFLALLFFLASPEGAMASDGTWQGKQYLKEDGSQAANEWVFDTHYQSWFYIKADANYAENEWLKQGDDYFYLKSGGYMAKSEWVEDKGAFYYLDQDGKMKRNAWVGTSYVGATGAKVIEDWVYDSQYDAWFYIKADGQHAEKEWLQIKGKDYYFKSGGYLLTSQWINQAYVNASGAKVQQGWLFDKQYQSWFYIKENGNYADKEWIFENGHYYYLKSGGYMAANEWIWDKESWFYLKFDGKMAEKEWVYDSHSQAWYYFKSGGYMTANEWIWDKESWFYLKSDGKIAEKEWVYDSHSQAWYYFKSGGYMTANEWIWDKESWFYLKSDGKIAEKEWVYDSHSQAWYYFKSGGYMAKNETVDGYQLGSDGKWLGGKTTNENAAYYQVVPVTANVYDSDGEKLSYISQGSVVWLDKDRKSDDKRLAITISGLSGYMKTEDLQALDASKDFIPYYESDGHRFYHYVAQNASIPVASHLSDMEVGKKYYSADGLHFDGFKLENPFLFKDLTEATNYSAEELDKVFSLLNINNSLLENKGATFKEAEEHYHINALYLLAHSALESNWGRSKIAKDKNNFFGITAYDTTPYLSAKTFDDVDKGILGATKWIKENYIDRGRTFLGNKASGMNVEYASDPYWGEKIASVMMKINEKLGGKD.

Residues 1-23 form the signal peptide; it reads MKKVRFIFLALLFFLASPEGAMA. Cell wall-binding repeat units follow at residues 42 to 63, 65 to 84, 86 to 105, 124 to 145, 147 to 166, 185 to 206, 208 to 227, 229 to 248, 250 to 271, 273 to 292, 294 to 315, 317 to 336, and 338 to 359; these read ANEW…DANY, ENEW…GGYM, KSEW…DGKM, IEDW…DGQH, EKEW…GGYL, QQGW…NGNY, DKEW…GGYM, ANEW…DGKM, EKEW…GGYM, and ANEW…DGKI.

Belongs to the glycosyl hydrolase 73 family.

Its subcellular location is the secreted. The enzyme catalyses an N(4)-(oligosaccharide-(1-&gt;3)-[oligosaccharide-(1-&gt;6)]-beta-D-Man-(1-&gt;4)-beta-D-GlcNAc-(1-&gt;4)-alpha-D-GlcNAc)-L-asparaginyl-[protein] + H2O = an oligosaccharide-(1-&gt;3)-[oligosaccharide-(1-&gt;6)]-beta-D-Man-(1-&gt;4)-D-GlcNAc + N(4)-(N-acetyl-beta-D-glucosaminyl)-L-asparaginyl-[protein]. Its function is as follows. Plays an important role in cell wall degradation and cell separation. This Streptococcus pneumoniae serotype 4 (strain ATCC BAA-334 / TIGR4) protein is Putative endo-beta-N-acetylglucosaminidase (lytB).